The chain runs to 59 residues: Large ribosomal subunit protein uL30 (59 aa).

The protein belongs to the universal ribosomal protein uL30 family. Part of the 50S ribosomal subunit.

This chain is Large ribosomal subunit protein uL30, found in Erwinia tasmaniensis (strain DSM 17950 / CFBP 7177 / CIP 109463 / NCPPB 4357 / Et1/99).